A 917-amino-acid chain; its full sequence is Methionine--tRNA ligase, cytoplasmic (917 aa).

The short motif at 44–54 is the 'HIGH' region element; the sequence is PYVNNVPHLGN. Positions 367-371 match the 'KMSKS' region motif; that stretch reads KFSKS. K370 contacts ATP. Disordered regions lie at residues 591–623 and 702–749; these read GSQDAQSSAPKTAEKPKQQKKQAPTKDKKGDKK and SCTP…AAAA. Over residues 614–623 the composition is skewed to basic and acidic residues; sequence PTKDKKGDKK. The span at 702-713 shows a compositional bias: low complexity; sequence SCTPTPTSTPAS. Residues 732 to 741 are compositionally biased toward basic and acidic residues; that stretch reads EPKKAKEQKK. The tRNA-binding domain occupies 756–857; that stretch reads DVGRLDMRVG…ADSKPGTPVV (102 aa).

The protein belongs to the class-I aminoacyl-tRNA synthetase family.

Its subcellular location is the cytoplasm. It catalyses the reaction tRNA(Met) + L-methionine + ATP = L-methionyl-tRNA(Met) + AMP + diphosphate. This chain is Methionine--tRNA ligase, cytoplasmic, found in Caenorhabditis elegans.